We begin with the raw amino-acid sequence, 72 residues long: SPbeta prophage-derived uncharacterized protein YorV (72 aa).

In Bacillus subtilis (strain 168), this protein is SPbeta prophage-derived uncharacterized protein YorV (yorV).